A 562-amino-acid chain; its full sequence is Cytochrome c oxidase subunit 1 (562 aa).

A helical transmembrane segment spans residues 21–41; the sequence is TLYFLVLGFLALIVGSLFGPF. His-72 serves as a coordination point for Fe(II)-heme a. The next 8 membrane-spanning stretches (helical) occupy residues 74–94, 105–125, 144–164, 187–207, 227–247, 267–287, 300–320, and 345–365; these read VLNA…YLPA, LMWL…LPLL, AFYL…YIVL, VVFW…AVLF, LFWW…YAII, LAFL…QFAD, VLTL…AASL, and AFVA…GGIV. Cu cation contacts are provided by His-233, Tyr-237, His-282, and His-283. Residues 233–237 constitute a cross-link (1'-histidyl-3'-tyrosine (His-Tyr)); that stretch reads HPIVY. His-384 lines the heme a3 pocket. 4 consecutive transmembrane segments (helical) span residues 385-405, 420-440, 471-491, and 527-547; these read FHLQ…YWLL, LGLA…VGLH, VLAG…LFSV, and IGFW…PTLV. His-386 contacts Fe(II)-heme a.

It belongs to the heme-copper respiratory oxidase family. Heme serves as cofactor. The cofactor is Cu cation.

Its subcellular location is the cell membrane. It catalyses the reaction 4 Fe(II)-[cytochrome c] + O2 + 8 H(+)(in) = 4 Fe(III)-[cytochrome c] + 2 H2O + 4 H(+)(out). It participates in energy metabolism; oxidative phosphorylation. The chain is Cytochrome c oxidase subunit 1 (cbaA) from Thermus thermophilus (strain ATCC 27634 / DSM 579 / HB8).